A 596-amino-acid chain; its full sequence is Dihydroxy-acid dehydratase pbrD, mitochondrial (596 aa).

The transit peptide at 1 to 18 (MATSSIRSRALGLSRRAR) directs the protein to the mitochondrion. C84 contacts [2Fe-2S] cluster. Residue D116 coordinates Mg(2+). Residue C157 coordinates [2Fe-2S] cluster. Residue D158 coordinates Mg(2+). C230 contacts [2Fe-2S] cluster. E483 is a binding site for Mg(2+). Catalysis depends on S509, which acts as the Proton acceptor.

This sequence belongs to the IlvD/Edd family. It depends on [2Fe-2S] cluster as a cofactor. Requires Mg(2+) as cofactor.

It localises to the mitochondrion. It catalyses the reaction (2R)-2,3-dihydroxy-3-methylbutanoate = 3-methyl-2-oxobutanoate + H2O. The enzyme catalyses (2R,3R)-2,3-dihydroxy-3-methylpentanoate = (S)-3-methyl-2-oxopentanoate + H2O. It participates in amino-acid biosynthesis; L-isoleucine biosynthesis; L-isoleucine from 2-oxobutanoate: step 3/4. The protein operates within amino-acid biosynthesis; L-valine biosynthesis; L-valine from pyruvate: step 3/4. Its activity is regulated as follows. DHAD activity is not inhibited by the dihydroxyacid dehydratase inhibitor aspterric acid (AA). Functionally, dihydroxyacid dehydratase; part of the gene cluster that mediates the biosynthesis of the sesquiterpenoid aspterric acid (AA), an inhibitor of dihydroxy-acid dehydratase (DHAD) effective as an herbicide. Performs the third step in the common pathway leading to biosynthesis of branched-chain amino acids. Catalyzes the dehydration of (2R,3R)-2,3-dihydroxy-3-methylpentanoate (2,3-dihydroxy-3-methylvalerate) into 2-oxo-3-methylpentanoate (2-oxo-3-methylvalerate) and of (2R)-2,3-dihydroxy-3-methylbutanoate (2,3-dihydroxyisovalerate) into 2-oxo-3-methylbutanoate (2-oxoisovalerate), the penultimate precursor to L-isoleucine and L-valine, respectively. PbrD confers self-resistance in the presence of the dihydroxyacid dehydratase inhibitor aspterric acid (AA) produced by the ast cluster. The sequence is that of Dihydroxy-acid dehydratase pbrD, mitochondrial from Penicillium brasilianum.